A 384-amino-acid polypeptide reads, in one-letter code: Formate-dependent phosphoribosylglycinamide formyltransferase (384 aa).

N(1)-(5-phospho-beta-D-ribosyl)glycinamide contacts are provided by residues 14 to 15 (EL) and Glu74. Residues Arg106, Lys147, 152 to 157 (SSGKGQ), 187 to 190 (EEFI), and Glu195 each bind ATP. One can recognise an ATP-grasp domain in the interval 111–300 (RLAAETLHLP…EFALHVRAVL (190 aa)). Mg(2+) contacts are provided by Glu259 and Glu271. Residues Asp278, Lys348, and 355 to 356 (RR) each bind N(1)-(5-phospho-beta-D-ribosyl)glycinamide.

This sequence belongs to the PurK/PurT family. As to quaternary structure, homodimer.

It carries out the reaction N(1)-(5-phospho-beta-D-ribosyl)glycinamide + formate + ATP = N(2)-formyl-N(1)-(5-phospho-beta-D-ribosyl)glycinamide + ADP + phosphate + H(+). It participates in purine metabolism; IMP biosynthesis via de novo pathway; N(2)-formyl-N(1)-(5-phospho-D-ribosyl)glycinamide from N(1)-(5-phospho-D-ribosyl)glycinamide (formate route): step 1/1. Functionally, involved in the de novo purine biosynthesis. Catalyzes the transfer of formate to 5-phospho-ribosyl-glycinamide (GAR), producing 5-phospho-ribosyl-N-formylglycinamide (FGAR). Formate is provided by PurU via hydrolysis of 10-formyl-tetrahydrofolate. This chain is Formate-dependent phosphoribosylglycinamide formyltransferase, found in Bacillus velezensis (strain DSM 23117 / BGSC 10A6 / LMG 26770 / FZB42) (Bacillus amyloliquefaciens subsp. plantarum).